A 671-amino-acid polypeptide reads, in one-letter code: Receptor-interacting serine/threonine-protein kinase 1 (671 aa).

Serine 6 is subject to Phosphoserine; by IKKA and IKKB. The Protein kinase domain maps to 17–289 (FLESAELDSG…GIEEKFRPFY (273 aa)). A Phosphoserine; by autocatalysis modification is found at serine 20. ATP-binding positions include 23–31 (LDSGGFGKV) and lysine 45. A Phosphoserine; by IKKA and IKKB modification is found at serine 25. Catalysis depends on aspartate 138, which acts as the Proton acceptor. Serine 161 carries the post-translational modification Phosphoserine; by RIPK3 and autocatalysis. Serine 166 carries the post-translational modification Phosphoserine; by autocatalysis. Residues 290–582 (LSQLEESVEE…QAIFDNTTSL (293 aa)) form an interaction with SQSTM1 region. Serine 303 carries the phosphoserine modification. Phosphoserine; by MAP3K7 is present on residues serine 320, serine 331, and serine 333. A compositionally biased stretch (polar residues) spans 331–348 (SRSNSATEQPGSLHSSQG). The disordered stretch occupies residues 331–354 (SRSNSATEQPGSLHSSQGLGMGPV). Residue lysine 377 forms a Glycyl lysine isopeptide (Lys-Gly) (interchain with G-Cter in ubiquitin) linkage. Residue tyrosine 384 is modified to Phosphotyrosine. The interval 389–455 (SRMDRQTKQQ…GNAVHQPSGL (67 aa)) is disordered. Polar residues predominate over residues 428–444 (NFQNTEGKGTAYSSAAS). The RIP homotypic interaction motif (RHIM) motif lies at 531 to 547 (YTIYNSTGIQIGAYNYM). Residues 583–669 (TDKHLDPIRE…DLLSSLIYVS (87 aa)) form the Death domain. Arginine 603 carries a (Microbial infection) N-beta-linked (GlcNAc) arginine glycan.

Belongs to the protein kinase superfamily. TKL Ser/Thr protein kinase family. Homodimer. Interacts (via RIP homotypic interaction motif) with RIPK3 (via RIP homotypic interaction motif); this interaction induces RIPK1 phosphorylation and formation of a RIPK1-RIPK3 necroptosis-inducing complex. Upon TNF-induced necrosis, the RIPK1-RIPK3 dimer further interacts with PGAM5 and MLKL; the formation of this complex leads to PGAM5 phosphorylation and increase in PGAM5 phosphatase activity. Interacts (via the death domain) with TNFRSF6 (via the death domain) and TRADD (via the death domain). Is recruited by TRADD to TNFRSF1A in a TNF-dependent process. Binds RNF216, EGFR, IKBKG, TRAF1, TRAF2 and TRAF3. Interacts with BNLF1. Interacts with SQSTM1 upon TNF-alpha stimulation. May interact with MAVS/IPS1. Interacts with ZFAND5. Interacts with RBCK1. Interacts with ZBP1. Interacts with BIRC2/c-IAP1, BIRC3/c-IAP2 and XIAP/BIRC4. Interacts (via kinase domain) with DAB2IP (via Ras-GAP domain); the interaction occurs in a TNF-alpha-dependent manner. Interacts with ARHGEF2. Interacts (via protein kinase domain) with RFFL; involved in RIPK1 ubiquitination. Interacts with RNF34; involved in RIPK1 ubiquitination. Interacts with TICAM1 and this interaction is enhanced in the presence of WDFY1. Interacts with PELI1. Interacts (via death domain) with CRADD (via death domain); the interaction is direct. Component of complex IIa composed of at least RIPK1, FADD and CASP8. Component of the AIM2 PANoptosome complex, a multiprotein complex that drives inflammatory cell death (PANoptosis). Interacts with MAP3K7, CFLAR, CASP8, FADD and NEMO. Interacts with TAX1BP1; this interaction negatively regulates RIPK1 ubiquitination. Interacts with GRB2. Interacts with DDX24; this interaction disrupts RLR signaling activation of IFN-dependent transcription factor IRF7. As to quaternary structure, (Microbial infection) Interacts with mumps virus protein SH; this interaction inhibits downstream NF-kappa-B pathway activation. In terms of assembly, (Microbial infection) Interacts with Murid herpesvirus 1 protein RIR1. (Microbial infection) Interacts (via RIP homotypic interaction motif) with herpes simplex virus 1/HHV-1 protein RIR1/ICP6 (via RIP homotypic interaction motif); this interaction prevents necroptosis activation. As to quaternary structure, (Microbial infection) Interacts (via RIP homotypic interaction motif) with herpes simplex virus 2/HHV-2 protein RIR1/ICP10 (via RIP homotypic interaction motif); this interaction prevents necroptosis activation. Post-translationally, (Microbial infection) Proteolytically cleaved by S.flexneri OspD3 within the RIP homotypic interaction motif (RHIM), leading to its degradation and inhibition of necroptosis. In terms of processing, proteolytically cleaved by CASP8 at Asp-324. Cleavage is crucial for limiting TNF-induced apoptosis, necroptosis and inflammatory response. Cleavage abolishes NF-kappa-B activation and enhances the interaction of TRADD with FADD. Proteolytically cleaved by CASP6 during intrinsic apoptosis. RIPK1 and RIPK3 undergo reciprocal auto- and trans-phosphorylation. Phosphorylation of Ser-161 by RIPK3 is necessary for the formation of the necroptosis-inducing complex. Phosphorylation at Ser-25 represses its kinase activity and consequently prevents TNF-mediated RIPK1-dependent cell death. Phosphorylated at Ser-320 by MAP3K7 which requires prior ubiquitination with 'Lys-63'-linked chains by BIRC2/c-IAP1 and BIRC3/c-IAP2. This phosphorylation positively regulates RIPK1 interaction with RIPK3 to promote necroptosis but negatively regulates RIPK1 kinase activity and its interaction with FADD to mediate apoptosis. Post-translationally, deubiquitinated by USP7; this modification is required for TNF-alpha-induced apoptosis. In terms of processing, ubiquitinated with 'Lys-11'-, 'Lys-48'-, 'Lys-63'- and linear-linked type ubiquitin. Polyubiquitination with 'Lys-63'-linked chains by TRAF2 induces association with the IKK complex. Deubiquitination of 'Lys-63'-linked chains and polyubiquitination with 'Lys-48'-linked chains by TNFAIP3 leads to RIPK1 proteasomal degradation and consequently down-regulates TNF-alpha-induced NF-kappa-B signaling. 'Lys-48'-linked polyubiquitination by RFFL or RNF34 also promotes proteasomal degradation and negatively regulates TNF-alpha-induced NF-kappa-B signaling. Linear polyubiquitinated; the head-to-tail linear polyubiquitination ('Met-1'-linked) is mediated by the LUBAC complex and decreases protein kinase activity. Deubiquitination of linear polyubiquitin by CYLD promotes the kinase activity. Polyubiquitinated with 'Lys-48' and 'Lys-63'-linked chains by BIRC2/c-IAP1 and BIRC3/c-IAP2, leading to activation of NF-kappa-B. Ubiquitinated with 'Lys-63'-linked chains by PELI1. Ubiquitination at Lys-377 with 'Lys-63'-linked chains by BIRC2/c-IAP1 and BIRC3/c-IAP2 is essential for its phosphorylation at Ser-320 mediated by MAP3K7. This ubiquitination is required for NF-kB activation, suppresses RIPK1 kinase activity and plays a critical role in preventing cell death during embryonic development. (Microbial infection) Glycosylated at Arg-603 by enteropathogenic E.coli protein NleB1: arginine GlcNAcylation prevents homotypic/heterotypic death domain interactions.

The protein resides in the cytoplasm. It is found in the cell membrane. The catalysed reaction is L-seryl-[protein] + ATP = O-phospho-L-seryl-[protein] + ADP + H(+). It carries out the reaction L-threonyl-[protein] + ATP = O-phospho-L-threonyl-[protein] + ADP + H(+). Serine-threonine kinase activity is inhibited by linear polyubiquitination ('Met-1'-linked) by the LUBAC complex. Inhibited by necrostatins, including necrostatin-1, necrostatin-3 and necrostatin-4. In terms of biological role, serine-threonine kinase which is a key regulator of TNF-mediated apoptosis, necroptosis and inflammatory pathways. Exhibits kinase activity-dependent functions that regulate cell death and kinase-independent scaffold functions regulating inflammatory signaling and cell survival. Has kinase-independent scaffold functions: upon binding of TNF to TNFR1, RIPK1 is recruited to the TNF-R1 signaling complex (TNF-RSC also known as complex I) where it acts as a scaffold protein promoting cell survival, in part, by activating the canonical NF-kappa-B pathway. Kinase activity is essential to regulate necroptosis and apoptosis, two parallel forms of cell death: upon activation of its protein kinase activity, regulates assembly of two death-inducing complexes, namely complex IIa (RIPK1-FADD-CASP8), which drives apoptosis, and the complex IIb (RIPK1-RIPK3-MLKL), which drives necroptosis. RIPK1 is required to limit CASP8-dependent TNFR1-induced apoptosis. In normal conditions, RIPK1 acts as an inhibitor of RIPK3-dependent necroptosis, a process mediated by RIPK3 component of complex IIb, which catalyzes phosphorylation of MLKL upon induction by ZBP1. Inhibits RIPK3-mediated necroptosis via FADD-mediated recruitment of CASP8, which cleaves RIPK1 and limits TNF-induced necroptosis. Required to inhibit apoptosis and necroptosis during embryonic development: acts by preventing the interaction of TRADD with FADD thereby limiting aberrant activation of CASP8. In addition to apoptosis and necroptosis, also involved in inflammatory response by promoting transcriptional production of pro-inflammatory cytokines, such as interleukin-6 (IL6). Phosphorylates RIPK3: RIPK1 and RIPK3 undergo reciprocal auto- and trans-phosphorylation. Phosphorylates DAB2IP at 'Ser-728' in a TNF-alpha-dependent manner, and thereby activates the MAP3K5-JNK apoptotic cascade. Required for ZBP1-induced NF-kappa-B activation in response to DNA damage. This chain is Receptor-interacting serine/threonine-protein kinase 1, found in Homo sapiens (Human).